The following is a 781-amino-acid chain: Mitogen-activated protein kinase 7 (781 aa).

Residues 1-27 (MAEPLKEDDGEDGSGEPPGPVKAEPAG) form a disordered region. Ala-2 is subject to N-acetylalanine. The tract at residues 2-77 (AEPLKEDDGE…VVSSARRRLT (76 aa)) is required for cytoplasmic targeting. The Protein kinase domain maps to 55-347 (YEIIETIGNG…AAAALRHPFL (293 aa)). Residues 61-69 (IGNGAYGVV) and Lys-84 contribute to the ATP site. The tract at residues 78–139 (GQQVAIKKIP…FKSVYVVLDL (62 aa)) is required for binding to MAP2K5. A necessary for oligomerization region spans residues 140–406 (MESDLHQIIH…QQIRFQPSLQ (267 aa)). The Proton acceptor role is filled by Asp-182. The TXY signature appears at 219–221 (TEY). A disordered region spans residues 402–708 (QPSLQPVASE…PKGSGAGYGV (307 aa)). The may not be required for kinase activity; required to stimulate MEF2C activity stretch occupies residues 407–781 (PVASEPGCPD…LADLPDLQEP (375 aa)). Composition is skewed to pro residues over residues 433-445 (SPPPAPLPCPGPA) and 454-463 (QPPPPASEPA). Over residues 476-486 (KAALKAALLKS) the composition is skewed to low complexity. 3 stretches are compositionally biased toward basic and acidic residues: residues 502 to 519 (PEPRKPVTAQERQREREE), 527 to 544 (RAKEREKRRQERERKERG), and 563 to 573 (DNDRSLLERWT). Residues 505–539 (RKPVTAQERQREREEKRRRRQERAKEREKRRQERE) carry the Nuclear localization signal motif. Pro residues-rich tracts occupy residues 578-594 (PPAPAPATARPPSPPAG) and 601-614 (GPLPQPACPPPAPA). Low complexity-rich tracts occupy residues 615-632 (AGPAAPQTTAASGLLAPQ) and 642-652 (GPSALSVLPYF). A compositionally biased stretch (pro residues) spans 653–664 (PSGPPPPDPGGA). Residues 668–685 (STSESPDVTLVTQQLSKS) are compositionally biased toward polar residues. Ser-685 carries the post-translational modification Phosphoserine. Thr-698 is modified (phosphothreonine).

The protein belongs to the protein kinase superfamily. CMGC Ser/Thr protein kinase family. MAP kinase subfamily. In terms of assembly, interacts with MAP2K5. Forms oligomers. Interacts with MEF2A, MEF2C and MEF2D; the interaction phosphorylates the MEF2s and enhances transcriptional activity of MEF2A, MEF2C but not MEF2D. Interacts with SGK1. Interacts with PML. Interacts (via N-terminal half) with HSP90AB1-CDC37 chaperone complex in resting cells; the interaction is MAP2K5-independent and prevents MAPK7 from ubiquitination and proteasomal degradation. Interacts with STUB1/CHIP; the interaction is enhanced in the presence of IGF1 or MAP2K5 and promotes STUB1/CHIP E3 ligase activity. Mg(2+) serves as cofactor. Dually phosphorylated on Thr-219 and Tyr-221, which activates the enzyme.

The protein resides in the cytoplasm. Its subcellular location is the nucleus. The protein localises to the PML body. The enzyme catalyses L-seryl-[protein] + ATP = O-phospho-L-seryl-[protein] + ADP + H(+). The catalysed reaction is L-threonyl-[protein] + ATP = O-phospho-L-threonyl-[protein] + ADP + H(+). With respect to regulation, activated by tyrosine and threonine phosphorylation. Activated in response to hyperosmolarity, hydrogen peroxide, and epidermal growth factor (EGF). In terms of biological role, plays a role in various cellular processes such as proliferation, differentiation and cell survival. The upstream activator of MAPK7 is the MAPK kinase MAP2K5. Upon activation, it translocates to the nucleus and phosphorylates various downstream targets including MEF2C. EGF activates MAPK7 through a Ras-independent and MAP2K5-dependent pathway. As part of the MAPK/ERK signaling pathway, acts as a negative regulator of apoptosis in cardiomyocytes via interaction with STUB1/CHIP and promotion of STUB1-mediated ubiquitination and degradation of ICER-type isoforms of CREM. May have a role in muscle cell differentiation. May be important for endothelial function and maintenance of blood vessel integrity. MAP2K5 and MAPK7 interact specifically with one another and not with MEK1/ERK1 or MEK2/ERK2 pathways. Phosphorylates SGK1 at Ser-78 and this is required for growth factor-induced cell cycle progression. Involved in the regulation of p53/TP53 by disrupting the PML-MDM2 interaction. The polypeptide is Mitogen-activated protein kinase 7 (MAPK7) (Bos taurus (Bovine)).